The sequence spans 299 residues: Recombination-associated protein RdgC (299 aa).

Belongs to the RdgC family.

The protein localises to the cytoplasm. It localises to the nucleoid. Functionally, may be involved in recombination. The protein is Recombination-associated protein RdgC of Neisseria meningitidis serogroup A / serotype 4A (strain DSM 15465 / Z2491).